A 598-amino-acid polypeptide reads, in one-letter code: Transcription factor cpaR (598 aa).

Positions 22–51 (CNGCRERKRRCVRRKRELPCLSCQAENRPC) form a DNA-binding region, zn(2)-C6 fungal-type.

The protein localises to the nucleus. Functionally, transcription factor; part of the gene cluster that mediates the biosynthesis of the fungal neurotoxin cyclopiazonic acid (CPA), a nanomolar inhibitor of Ca(2+)-ATPase with a unique pentacyclic indole tetramic acid scaffold. The sequence is that of Transcription factor cpaR from Aspergillus oryzae (Yellow koji mold).